The primary structure comprises 552 residues: Non-structural protein NS1 (552 aa).

It belongs to the orbivirus non-structural protein NS1 family.

In Antilocapra americana (Pronghorn), this protein is Non-structural protein NS1 (Segment-5).